We begin with the raw amino-acid sequence, 398 residues long: DJ-1 protein homolog E (398 aa).

2 PfpI endopeptidase domains span residues 7–199 and 210–393; these read KSAL…ESLG and ASVL…TALG.

This sequence belongs to the peptidase C56 family. In terms of assembly, homotrimer. In terms of tissue distribution, expressed in roots and cauline leaves.

May be involved in oxidative stress response. In Arabidopsis thaliana (Mouse-ear cress), this protein is DJ-1 protein homolog E (DJ1E).